A 240-amino-acid chain; its full sequence is Lectin (240 aa).

Glutamate 127 and aspartate 129 together coordinate Mn(2+). Residues aspartate 129, tyrosine 131, asparagine 133, and aspartate 138 each coordinate Ca(2+). 2 residues coordinate Mn(2+): aspartate 138 and histidine 143.

This sequence belongs to the leguminous lectin family. As to quaternary structure, heterotetramer of two alpha and two beta chains; disulfide bond linked.

Its function is as follows. Binds preferentially to oligosaccharides bearing the sequence Man-alpha-1-&gt;2 Man-alpha-1-&gt;6 Man-alpha-1-&gt;6Man found in early steps of glycoprotein processing in the endoplasmic reticulum. It binds weakly to highly processed oligosaccharide structures. This Leucomphalos mildbraedii (Bowringia mildbraedii) protein is Lectin.